Consider the following 130-residue polypeptide: NADH-quinone oxidoreductase subunit A (130 aa).

3 consecutive transmembrane segments (helical) span residues 17–37 (YIFVGLFFVVACFISCVMLAL), 74–94 (LVGILFIIFDLEIIFLFPWAV), and 99–119 (LGPAAFVSVLIFLIILTVGFV).

It belongs to the complex I subunit 3 family. NDH-1 is composed of 14 different subunits. Subunits NuoA, H, J, K, L, M, N constitute the membrane sector of the complex.

The protein resides in the cell inner membrane. It carries out the reaction a quinone + NADH + 5 H(+)(in) = a quinol + NAD(+) + 4 H(+)(out). Its function is as follows. NDH-1 shuttles electrons from NADH, via FMN and iron-sulfur (Fe-S) centers, to quinones in the respiratory chain. The immediate electron acceptor for the enzyme in this species is believed to be ubiquinone. Couples the redox reaction to proton translocation (for every two electrons transferred, four hydrogen ions are translocated across the cytoplasmic membrane), and thus conserves the redox energy in a proton gradient. The protein is NADH-quinone oxidoreductase subunit A of Neorickettsia sennetsu (strain ATCC VR-367 / Miyayama) (Ehrlichia sennetsu).